A 156-amino-acid chain; its full sequence is Cyclic pyranopterin monophosphate synthase (156 aa).

Substrate-binding positions include 73-75 (LCH) and 110-111 (ME). D125 is a catalytic residue.

Belongs to the MoaC family. As to quaternary structure, homohexamer; trimer of dimers.

It carries out the reaction (8S)-3',8-cyclo-7,8-dihydroguanosine 5'-triphosphate = cyclic pyranopterin phosphate + diphosphate. It functions in the pathway cofactor biosynthesis; molybdopterin biosynthesis. In terms of biological role, catalyzes the conversion of (8S)-3',8-cyclo-7,8-dihydroguanosine 5'-triphosphate to cyclic pyranopterin monophosphate (cPMP). The polypeptide is Cyclic pyranopterin monophosphate synthase (Pseudomonas putida (strain GB-1)).